The sequence spans 422 residues: Keratin, type I cytoskeletal 23 (422 aa).

Residues Met-1–Arg-24 are compositionally biased toward polar residues. A disordered region spans residues Met-1–His-35. Residues Met-1–Asn-71 form a head region. Residues Gly-72–Trp-107 are coil 1A. The 311-residue stretch at Gly-72–Thr-382 folds into the IF rod domain. The linker 1 stretch occupies residues His-108–Asn-125. The segment at Ile-126–Asn-217 is coil 1B. Positions His-218–Val-240 are linker 12. Residues Leu-241–Asp-378 form a coil 2 region. Positions Thr-379–Ile-422 are rod-like helical tail.

Belongs to the intermediate filament family. As to quaternary structure, heterotetramer of two type I and two type II keratins.

The sequence is that of Keratin, type I cytoskeletal 23 (Krt23) from Mus musculus (Mouse).